Here is a 351-residue protein sequence, read N- to C-terminus: dTDP-glucose 4,6-dehydratase (351 aa).

NAD(+)-binding positions include 12-13, 32-35, 58-59, 80-84, and Thr-99; these read FI, DALT, DI, and FAAES. Ser-84 serves as a coordination point for substrate. Residue Thr-133 coordinates substrate. Asp-134 serves as the catalytic Proton donor. Catalysis depends on proton acceptor residues Glu-135 and Tyr-158. Residue 158 to 162 participates in NAD(+) binding; sequence YSASK. A substrate-binding site is contributed by Asn-187. Asn-188 is an NAD(+) binding site. Residues 197-198, 213-215, Arg-222, Asn-257, and 289-293 contribute to the substrate site; these read KL, PVY, and DRPGH.

It belongs to the NAD(P)-dependent epimerase/dehydratase family. dTDP-glucose dehydratase subfamily. In terms of assembly, homodimer. Requires NAD(+) as cofactor.

The enzyme catalyses dTDP-alpha-D-glucose = dTDP-4-dehydro-6-deoxy-alpha-D-glucose + H2O. The protein operates within carbohydrate biosynthesis; dTDP-L-rhamnose biosynthesis. It participates in bacterial outer membrane biogenesis; LPS O-antigen biosynthesis. Catalyzes the dehydration of dTDP-D-glucose to form dTDP-6-deoxy-D-xylo-4-hexulose via a three-step process involving oxidation, dehydration and reduction. This is dTDP-glucose 4,6-dehydratase (rfbB) from Xanthomonas campestris pv. campestris (strain ATCC 33913 / DSM 3586 / NCPPB 528 / LMG 568 / P 25).